Here is a 216-residue protein sequence, read N- to C-terminus: Adenylate kinase (216 aa).

Residue 10–15 (GAGKGT) coordinates ATP. An NMP region spans residues 30–59 (STGDMFRAAMKAETEMGLQAKSFIDKGALV). AMP contacts are provided by residues T31, R36, 57–59 (ALV), 85–88 (GFPR), and Q92. Positions 126–163 (GRRICKECGATYHLEFNPPAKADVCDKCGGELYQRSDD) are LID. Position 127 (R127) interacts with ATP. Zn(2+)-binding residues include C130 and C133. An ATP-binding site is contributed by 136 to 137 (TY). Zn(2+)-binding residues include C150 and C153. Residues R160 and R171 each contribute to the AMP site. Q199 contributes to the ATP binding site.

Belongs to the adenylate kinase family. As to quaternary structure, monomer.

The protein resides in the cytoplasm. It catalyses the reaction AMP + ATP = 2 ADP. The protein operates within purine metabolism; AMP biosynthesis via salvage pathway; AMP from ADP: step 1/1. Its function is as follows. Catalyzes the reversible transfer of the terminal phosphate group between ATP and AMP. Plays an important role in cellular energy homeostasis and in adenine nucleotide metabolism. This is Adenylate kinase from Bacillus cereus (strain ATCC 10987 / NRS 248).